The following is a 1401-amino-acid chain: DNA-directed RNA polymerase subunit beta' (1401 aa).

Zn(2+)-binding residues include Cys-70, Cys-72, Cys-85, and Cys-88. Mg(2+)-binding residues include Asp-460, Asp-462, and Asp-464. Positions 808, 882, 889, and 892 each coordinate Zn(2+).

It belongs to the RNA polymerase beta' chain family. The RNAP catalytic core consists of 2 alpha, 1 beta, 1 beta' and 1 omega subunit. When a sigma factor is associated with the core the holoenzyme is formed, which can initiate transcription. Mg(2+) is required as a cofactor. Requires Zn(2+) as cofactor.

The catalysed reaction is RNA(n) + a ribonucleoside 5'-triphosphate = RNA(n+1) + diphosphate. In terms of biological role, DNA-dependent RNA polymerase catalyzes the transcription of DNA into RNA using the four ribonucleoside triphosphates as substrates. This is DNA-directed RNA polymerase subunit beta' from Legionella pneumophila (strain Lens).